The primary structure comprises 89 residues: Large ribosomal subunit protein eL34 (89 aa).

A disordered region spans residues 1-22 (MPAPRYKSGSSKKVYRKAPGNS).

Belongs to the eukaryotic ribosomal protein eL34 family.

This is Large ribosomal subunit protein eL34 from Methanococcus maripaludis (strain C5 / ATCC BAA-1333).